A 142-amino-acid polypeptide reads, in one-letter code: MSIKYLMLLFAAMIIRSLADSGNAIETTSPEITNATTDIPAIRLCGPEGDGYCLHGDCIHARDIDGMYCRCSHGYTGIRCQHVVLVDYQRSGKPDTTTSYIPSLGIVLVLVGIIITCCLLSVYMFTRRTKLPIQDMVVLYFL.

The N-terminal stretch at 1-19 (MSIKYLMLLFAAMIIRSLA) is a signal peptide. Topologically, residues 20 to 104 (DSGNAIETTS…DTTTSYIPSL (85 aa)) are extracellular. Asn34 is a glycosylation site (N-linked (GlcNAc...) asparagine; by host). Cys71 and Cys80 are oxidised to a cystine. Residues 105–125 (GIVLVLVGIIITCCLLSVYMF) form a helical membrane-spanning segment. Topologically, residues 126–142 (TRRTKLPIQDMVVLYFL) are cytoplasmic.

Belongs to the orthopoxvirus OPG019 family. In terms of assembly, interacts with host EGFR. In terms of processing, cleaved at the cell surface by host ADAM10, thereby releasing the secreted form of VGF.

The protein localises to the host membrane. Its subcellular location is the secreted. Its function is as follows. Stimulates cellular proliferation (hyperplasia)and mobility around infected cells to promote rapid and efficient spread of infection. This effect is beneficial for virus replication in vivo, because poxviruses replicate possibly better in proliferating cells than in quiescent cells. Acts by binding host EGFR, inducing its dimerization, autophosphorylation and leading to activation of several cellular pathways regulating cell proliferation or cell survival. The activation by host EGFR of mitogen activated protein kinases (MAPK) and extracellular-signal regulated kinases (ERK) are essential for the positive effect of vaccinia growth factor on poxvirus virulence in vivo. This Cynomys gunnisoni (Gunnison's prairie dog) protein is Pro-Viral epidermal growth factor (OPG019).